Consider the following 369-residue polypeptide: Bi-functional coumaroyl CoA and feruloyl CoA ortho-hydroxylase Diox1 (369 aa).

Residues 209 to 319 enclose the Fe2OG dioxygenase domain; it reads IREPMLVGSR…RISVPLFVNP (111 aa). Tyr225 serves as a coordination point for 2-oxoglutarate. 3 residues coordinate Fe cation: His240, Asp242, and His300. 2-oxoglutarate is bound by residues Arg310 and Ser312.

This sequence belongs to the iron/ascorbate-dependent oxidoreductase family. L-ascorbate serves as cofactor. It depends on Fe(2+) as a cofactor.

It carries out the reaction (E)-4-coumaroyl-CoA + 2-oxoglutarate + O2 = (E)-2,4-dihydroxycinnamoyl-CoA + succinate + CO2. The catalysed reaction is (E)-feruloyl-CoA + 2-oxoglutarate + O2 = (E)-6-hydroxyferuloyl-CoA + succinate + CO2. It participates in phenylpropanoid metabolism. Functionally, 2-oxoglutarate (OG)- and Fe(II)-dependent dioxygenase (2OGD) involved in scopoletin and umbelliferone biosynthesis. Converts feruloyl CoA into 6'-hydroxyferuloyl CoA, and p-coumaroyl CoA into 2,4-dihydroxycinnamoyl-CoA. This Ruta graveolens (Common rue) protein is Bi-functional coumaroyl CoA and feruloyl CoA ortho-hydroxylase Diox1.